A 128-amino-acid polypeptide reads, in one-letter code: UPF0325 protein PMI2289 (128 aa).

It belongs to the UPF0325 family.

In Proteus mirabilis (strain HI4320), this protein is UPF0325 protein PMI2289.